The following is a 511-amino-acid chain: Probable pectinesterase/pectinesterase inhibitor 17 (511 aa).

Residues 1-23 form the signal peptide; that stretch reads MMAFRAYIINFVILCILVASTVS. The pectinesterase inhibitor 17 stretch occupies residues 24-171; it reads GYNQKDVKAW…SNLLCNTLAI (148 aa). 2 N-linked (GlcNAc...) asparagine glycosylation sites follow: Asn112 and Asn160. The pectinesterase 17 stretch occupies residues 237 to 414; it reads VKQGVYSENL…LRPVLGSTKT (178 aa). Residues Thr277 and Gln307 each coordinate substrate. Residue Asp330 is the Proton donor; for pectinesterase activity of the active site. A disulfide bridge connects residues Cys344 and Cys364. Residue Asp351 is the Nucleophile; for pectinesterase activity of the active site. The substrate site is built by Arg418 and Trp420.

It in the N-terminal section; belongs to the PMEI family. In the C-terminal section; belongs to the pectinesterase family. Expressed in siliques.

The protein resides in the secreted. Its subcellular location is the cell wall. It catalyses the reaction [(1-&gt;4)-alpha-D-galacturonosyl methyl ester](n) + n H2O = [(1-&gt;4)-alpha-D-galacturonosyl](n) + n methanol + n H(+). It participates in glycan metabolism; pectin degradation; 2-dehydro-3-deoxy-D-gluconate from pectin: step 1/5. Functionally, acts in the modification of cell walls via demethylesterification of cell wall pectin. The polypeptide is Probable pectinesterase/pectinesterase inhibitor 17 (PME17) (Arabidopsis thaliana (Mouse-ear cress)).